We begin with the raw amino-acid sequence, 263 residues long: Endonuclease 8 (263 aa).

Pro-2 (schiff-base intermediate with DNA) is an active-site residue. The Proton donor role is filled by Glu-3. Catalysis depends on Lys-53, which acts as the Proton donor; for beta-elimination activity. DNA is bound by residues Gln-70, Arg-125, and Asn-169. Residues 229–263 (KVFHRDGEACERCGGIIEKTTLSSRPFYWCPHCQK) form an FPG-type zinc finger. Catalysis depends on Arg-253, which acts as the Proton donor; for delta-elimination activity.

The protein belongs to the FPG family. It depends on Zn(2+) as a cofactor.

It catalyses the reaction 2'-deoxyribonucleotide-(2'-deoxyribose 5'-phosphate)-2'-deoxyribonucleotide-DNA = a 3'-end 2'-deoxyribonucleotide-(2,3-dehydro-2,3-deoxyribose 5'-phosphate)-DNA + a 5'-end 5'-phospho-2'-deoxyribonucleoside-DNA + H(+). Involved in base excision repair of DNA damaged by oxidation or by mutagenic agents. Acts as a DNA glycosylase that recognizes and removes damaged bases. Has a preference for oxidized pyrimidines, such as thymine glycol, 5,6-dihydrouracil and 5,6-dihydrothymine. Has AP (apurinic/apyrimidinic) lyase activity and introduces nicks in the DNA strand. Cleaves the DNA backbone by beta-delta elimination to generate a single-strand break at the site of the removed base with both 3'- and 5'-phosphates. The sequence is that of Endonuclease 8 from Salmonella schwarzengrund (strain CVM19633).